We begin with the raw amino-acid sequence, 156 residues long: Small ribosomal subunit protein uS7 (156 aa).

It belongs to the universal ribosomal protein uS7 family. As to quaternary structure, part of the 30S ribosomal subunit. Contacts proteins S9 and S11.

Functionally, one of the primary rRNA binding proteins, it binds directly to 16S rRNA where it nucleates assembly of the head domain of the 30S subunit. Is located at the subunit interface close to the decoding center, probably blocks exit of the E-site tRNA. This chain is Small ribosomal subunit protein uS7, found in Leifsonia xyli subsp. xyli (strain CTCB07).